Here is a 311-residue protein sequence, read N- to C-terminus: Acetyl-coenzyme A carboxylase carboxyl transferase subunit beta (311 aa).

The CoA carboxyltransferase N-terminal domain maps to 32-299 (LWVKCPVSEE…TSMPAALTPP (268 aa)). Positions 291-311 (SMPAALTPPAPDHVVADGGSH) are disordered.

Belongs to the AccD/PCCB family. As to quaternary structure, acetyl-CoA carboxylase is a heterohexamer composed of biotin carboxyl carrier protein (AccB), biotin carboxylase (AccC) and two subunits each of ACCase subunit alpha (AccA) and ACCase subunit beta (AccD).

It localises to the cytoplasm. The catalysed reaction is N(6)-carboxybiotinyl-L-lysyl-[protein] + acetyl-CoA = N(6)-biotinyl-L-lysyl-[protein] + malonyl-CoA. Its pathway is lipid metabolism; malonyl-CoA biosynthesis; malonyl-CoA from acetyl-CoA: step 1/1. Component of the acetyl coenzyme A carboxylase (ACC) complex. Biotin carboxylase (BC) catalyzes the carboxylation of biotin on its carrier protein (BCCP) and then the CO(2) group is transferred by the transcarboxylase to acetyl-CoA to form malonyl-CoA. This chain is Acetyl-coenzyme A carboxylase carboxyl transferase subunit beta, found in Maricaulis maris (strain MCS10) (Caulobacter maris).